Reading from the N-terminus, the 321-residue chain is Histidine N-alpha-methyltransferase (321 aa).

Y56 contacts L-histidine. Residues G86, K92, D113, and 141–142 (DF) contribute to the S-adenosyl-L-methionine site. Residues N166, Y206, and 282 to 284 (EVS) each bind L-histidine.

This sequence belongs to the methyltransferase superfamily. EgtD family. In terms of assembly, monomer.

It catalyses the reaction L-histidine + 3 S-adenosyl-L-methionine = hercynine + 3 S-adenosyl-L-homocysteine + 3 H(+). It functions in the pathway amino-acid biosynthesis; ergothioneine biosynthesis. Catalyzes the SAM-dependent triple methylation of the alpha-amino group of histidine to form hercynine, a step in the biosynthesis pathway of ergothioneine. Among all the proteinogenic amino acids, only L-histidine is a substrate. This is Histidine N-alpha-methyltransferase from Mycolicibacterium smegmatis (strain ATCC 700084 / mc(2)155) (Mycobacterium smegmatis).